The primary structure comprises 43 residues: CGTNRAWCRNAKDHCCCGYSCVKPIWASKPEDDGYCWKKFGGC.

Intrachain disulfides connect C1/C16, C8/C21, C15/C36, and C17/C43.

Belongs to the neurotoxin 35 family. Post-translationally, contains 4 disulfide bonds. Expressed by the venom gland.

The protein resides in the secreted. This toxin blocks the neuromuscular transmission, and also acts on muscle. It exerts an effect of first exciting and then inhibiting the contraction of muscle. This toxin is active only against mammals. In Macrothele raveni (Funnel-web spider), this protein is U5-hexatoxin-Mr1a.